Reading from the N-terminus, the 206-residue chain is Uridine kinase (206 aa).

11-18 (GGSGSGKT) provides a ligand contact to ATP.

Belongs to the uridine kinase family.

The protein localises to the cytoplasm. The enzyme catalyses uridine + ATP = UMP + ADP + H(+). It catalyses the reaction cytidine + ATP = CMP + ADP + H(+). It functions in the pathway pyrimidine metabolism; CTP biosynthesis via salvage pathway; CTP from cytidine: step 1/3. Its pathway is pyrimidine metabolism; UMP biosynthesis via salvage pathway; UMP from uridine: step 1/1. The polypeptide is Uridine kinase (Macrococcus caseolyticus (strain JCSC5402) (Macrococcoides caseolyticum)).